The primary structure comprises 109 residues: Ribonuclease P protein component (109 aa).

The protein belongs to the RnpA family. As to quaternary structure, consists of a catalytic RNA component (M1 or rnpB) and a protein subunit.

It catalyses the reaction Endonucleolytic cleavage of RNA, removing 5'-extranucleotides from tRNA precursor.. RNaseP catalyzes the removal of the 5'-leader sequence from pre-tRNA to produce the mature 5'-terminus. It can also cleave other RNA substrates such as 4.5S RNA. The protein component plays an auxiliary but essential role in vivo by binding to the 5'-leader sequence and broadening the substrate specificity of the ribozyme. The protein is Ribonuclease P protein component of Nitratiruptor sp. (strain SB155-2).